Here is a 100-residue protein sequence, read N- to C-terminus: UPF0213 protein YhbQ (100 aa).

Residues 2–77 (TPWFLYLIRT…KQLTKRQKER (76 aa)) enclose the GIY-YIG domain.

Belongs to the UPF0213 family.

The chain is UPF0213 protein YhbQ from Escherichia coli (strain K12 / MC4100 / BW2952).